The sequence spans 383 residues: Protein RecA (383 aa).

79–86 (GPESSGKT) is a binding site for ATP. Residues 347-369 (IEEDNTEEKQSSKEKETDEKADK) form a disordered region. Residues 353 to 369 (EEKQSSKEKETDEKADK) show a composition bias toward basic and acidic residues.

The protein belongs to the RecA family.

It is found in the cytoplasm. Its function is as follows. Can catalyze the hydrolysis of ATP in the presence of single-stranded DNA, the ATP-dependent uptake of single-stranded DNA by duplex DNA, and the ATP-dependent hybridization of homologous single-stranded DNAs. It interacts with LexA causing its activation and leading to its autocatalytic cleavage. The protein is Protein RecA of Streptococcus mutans serotype c (strain ATCC 700610 / UA159).